The sequence spans 500 residues: Probable cytosol aminopeptidase (500 aa).

Residues Lys-261 and Asp-266 each coordinate Mn(2+). Lys-273 is a catalytic residue. Positions 284, 343, and 345 each coordinate Mn(2+). The active site involves Arg-347.

This sequence belongs to the peptidase M17 family. It depends on Mn(2+) as a cofactor.

The protein resides in the cytoplasm. The enzyme catalyses Release of an N-terminal amino acid, Xaa-|-Yaa-, in which Xaa is preferably Leu, but may be other amino acids including Pro although not Arg or Lys, and Yaa may be Pro. Amino acid amides and methyl esters are also readily hydrolyzed, but rates on arylamides are exceedingly low.. It carries out the reaction Release of an N-terminal amino acid, preferentially leucine, but not glutamic or aspartic acids.. Functionally, presumably involved in the processing and regular turnover of intracellular proteins. Catalyzes the removal of unsubstituted N-terminal amino acids from various peptides. In Bacillus subtilis (strain 168), this protein is Probable cytosol aminopeptidase (pepA).